We begin with the raw amino-acid sequence, 179 residues long: Large ribosomal subunit protein uL6 (179 aa).

Belongs to the universal ribosomal protein uL6 family. In terms of assembly, part of the 50S ribosomal subunit.

This protein binds to the 23S rRNA, and is important in its secondary structure. It is located near the subunit interface in the base of the L7/L12 stalk, and near the tRNA binding site of the peptidyltransferase center. The sequence is that of Large ribosomal subunit protein uL6 from Solidesulfovibrio magneticus (strain ATCC 700980 / DSM 13731 / RS-1) (Desulfovibrio magneticus).